The following is a 573-amino-acid chain: Sulfite reductase [NADPH] hemoprotein beta-component (573 aa).

[4Fe-4S] cluster-binding residues include C438, C444, C483, and C487. Residue C487 participates in siroheme binding.

Belongs to the nitrite and sulfite reductase 4Fe-4S domain family. Alpha(8)-beta(8). The alpha component is a flavoprotein, the beta component is a hemoprotein. The cofactor is siroheme. Requires [4Fe-4S] cluster as cofactor.

The enzyme catalyses hydrogen sulfide + 3 NADP(+) + 3 H2O = sulfite + 3 NADPH + 4 H(+). Its pathway is sulfur metabolism; hydrogen sulfide biosynthesis; hydrogen sulfide from sulfite (NADPH route): step 1/1. In terms of biological role, component of the sulfite reductase complex that catalyzes the 6-electron reduction of sulfite to sulfide. This is one of several activities required for the biosynthesis of L-cysteine from sulfate. The chain is Sulfite reductase [NADPH] hemoprotein beta-component from Geobacillus thermodenitrificans (strain NG80-2).